The sequence spans 243 residues: Probable fructoselysine utilization operon transcriptional repressor (243 aa).

The HTH gntR-type domain occupies 10-78; the sequence is QLLYATVRQR…QGKGTFVQSQ (69 aa). The segment at residues 38 to 57 is a DNA-binding region (H-T-H motif); that stretch reads ENELCTQYNVSRITIRKAIS.

Its pathway is carbohydrate metabolism; fructoselysine degradation [regulation]. Functionally, may regulate the transcription of the frlABCDR operon, involved in the utilization of fructoselysine and psicoselysine. The sequence is that of Probable fructoselysine utilization operon transcriptional repressor from Escherichia coli (strain K12).